A 593-amino-acid polypeptide reads, in one-letter code: Isocitrate dehydrogenase kinase/phosphatase (593 aa).

ATP contacts are provided by residues 315–321 (APGIRGM) and lysine 336. Residue aspartate 371 is part of the active site.

Belongs to the AceK family.

The protein resides in the cytoplasm. It catalyses the reaction L-seryl-[isocitrate dehydrogenase] + ATP = O-phospho-L-seryl-[isocitrate dehydrogenase] + ADP + H(+). In terms of biological role, bifunctional enzyme which can phosphorylate or dephosphorylate isocitrate dehydrogenase (IDH) on a specific serine residue. This is a regulatory mechanism which enables bacteria to bypass the Krebs cycle via the glyoxylate shunt in response to the source of carbon. When bacteria are grown on glucose, IDH is fully active and unphosphorylated, but when grown on acetate or ethanol, the activity of IDH declines drastically concomitant with its phosphorylation. The chain is Isocitrate dehydrogenase kinase/phosphatase from Salmonella typhi.